Consider the following 1029-residue polypeptide: Pro-apoptotic serine protease NMA111 (1029 aa).

Residues 1–49 (MNGPTSQRAKRKQGSASSLDDRPPKHQRALNGAKQQSTGDNTPEEDMYD) form a disordered region. The serine protease stretch occupies residues 84–274 (VVSIRFCQTC…LPLDRPLRAL (191 aa)). Catalysis depends on charge relay system residues His-122, Asp-153, and Ser-235. PDZ domains follow at residues 307–379 (PEWE…QRGG) and 845–958 (EFLG…VTFD). The tract at residues 997–1029 (KAMEGEPSEGVPAVEEEAGGAVDDDVPMAAVEK) is disordered. Residues 1010–1022 (VEEEAGGAVDDDV) show a composition bias toward acidic residues.

It belongs to the peptidase S1C family.

The protein resides in the nucleus. Its function is as follows. Nuclear serine protease which mediates apoptosis. This is Pro-apoptotic serine protease NMA111 (NMA111) from Pyricularia oryzae (strain 70-15 / ATCC MYA-4617 / FGSC 8958) (Rice blast fungus).